The sequence spans 793 residues: Sucrose synthase (793 aa).

Residues 259–738 (MILNIAIISP…AIKRVTEKYS (480 aa)) form a GT-B glycosyltransferase region.

Belongs to the glycosyltransferase 1 family. Homotetramer.

The catalysed reaction is an NDP-alpha-D-glucose + D-fructose = a ribonucleoside 5'-diphosphate + sucrose + H(+). Its function is as follows. Catalyzes the reversible conversion of sucrose and a nucleotide disphosphate (NDP) into fructose and NDP-glucose; although the reaction is freely reversible in vitro, the physiological reaction seems to be sucrose cleavage. Unlike characterized plant enzymes prefers ADP as a cosubstrate, whereas plants prefer UDP. Its preference for ADP over UDP suggests it may directly link sucrose and glycogen metabolism. In Melioribacter roseus (strain JCM 17771 / P3M-2), this protein is Sucrose synthase.